The primary structure comprises 221 residues: Small ribosomal subunit protein uS3 (221 aa).

The KH type-2 domain occupies 39 to 108 (IRKFVKKELF…NILINIVEVK (70 aa)).

Belongs to the universal ribosomal protein uS3 family. Part of the 30S ribosomal subunit. Forms a tight complex with proteins S10 and S14.

Its function is as follows. Binds the lower part of the 30S subunit head. Binds mRNA in the 70S ribosome, positioning it for translation. This chain is Small ribosomal subunit protein uS3, found in Clostridium botulinum (strain Alaska E43 / Type E3).